Consider the following 755-residue polypeptide: Anaphase-promoting complex subunit 5 (755 aa).

A Phosphoserine modification is found at serine 195. TPR repeat units lie at residues 209-249 (QKQA…FNPD), 250-300 (FAEA…GRSL), 301-337 (RYAALNLAALHCRFGHYQQAELALQEAIRIAQESNDH), 338-378 (VCLQ…YLAS), 379-418 (LGIQSLVQQRAFAGKTANKLMDALKDSDLLHWKHSLSELI), 419-466 (DISI…TESF), 467-500 (AVALCHLAELHAEQGCFAAASEVLKHLKERFPPN), 501-540 (SQHAQLWMLCDQKIQFDRAMNDGKYHLADSLVTGITALNS), 541-580 (IEGVYRKAVVLQAQNQMSEAHKLLQKLLVHCQKLKNTEMV), 581-620 (ISVLLSVAELYWRSSSPTIALPMLLQALALSKEYRLQYLA), 621-660 (SETVLNLAFAQLILGIPEQALSLLHMAIEPILADGAILDK), 661-696 (GRAMFLVAKCQVASAASYDQPKKAEALEAAIENLNE), and 697-736 (AKNYFAKVDCKERIRDVVYFQARLYHTLGKTQERNRCAML). Threonine 232 carries the phosphothreonine modification.

The protein belongs to the APC5 family. The mammalian APC/C is composed at least of 14 distinct subunits ANAPC1, ANAPC2, CDC27/APC3, ANAPC4, ANAPC5, CDC16/APC6, ANAPC7, CDC23/APC8, ANAPC10, ANAPC11, CDC26/APC12, ANAPC13, ANAPC15 and ANAPC16 that assemble into a complex of at least 19 chains with a combined molecular mass of around 1.2 MDa; APC/C interacts with FZR1 and FBXO5.

The protein localises to the nucleus. It localises to the cytoplasm. It is found in the cytoskeleton. The protein resides in the spindle. Its pathway is protein modification; protein ubiquitination. Its function is as follows. Component of the anaphase promoting complex/cyclosome (APC/C), a cell cycle-regulated E3 ubiquitin ligase that controls progression through mitosis and the G1 phase of the cell cycle. The APC/C complex acts by mediating ubiquitination and subsequent degradation of target proteins: it mainly mediates the formation of 'Lys-11'-linked polyubiquitin chains and, to a lower extent, the formation of 'Lys-48'- and 'Lys-63'-linked polyubiquitin chains. The APC/C complex catalyzes assembly of branched 'Lys-11'-/'Lys-48'-linked branched ubiquitin chains on target proteins. The polypeptide is Anaphase-promoting complex subunit 5 (ANAPC5) (Homo sapiens (Human)).